The sequence spans 189 residues: UPF0149 protein VFMJ11_2207 (189 aa).

Belongs to the UPF0149 family.

The chain is UPF0149 protein VFMJ11_2207 from Aliivibrio fischeri (strain MJ11) (Vibrio fischeri).